The primary structure comprises 463 residues: MNVPVEKNSSFSKELQQTLRSRHLLRTELSFSDEMIEWHIKNGYITAENSISINKRRYRCNRCGQTDQRYFSFYHSSGKNKLYCRSCVMMGRVSEEVPLYSWKEENESNWKSIKLTWDGKLSSGQQKAANVLIEAISKKEELLIWAVCGAGKTEMLFPGIESALNQGLRVCIATPRTDVVLELAPRLKAAFQGADISALYGGSDDKGRLSPLMISTTHQLLRYKDAIDVMIIDEVDAFPYSADQTLQFAVQKARKKNSTLVYLSATPPKELKRKALNGQLHSVRIPARHHRKPLPEPRFVWCGNWKKKLNRNKIPPAVKRWIEFHVKEGRPVFLFVPSVSILEKAAACFKGVHCRTASVHAEDKHRKEKVQQFRDGQLDLLITTTILERGVTVPKVQTGVLGAESSIFTESALVQIAGRTGRHKEYADGDVIYFHFGKTKSMLDARKHIKEMNELAAKVECTD.

Residues Cys-60, Cys-63, Cys-84, and Cys-87 each coordinate Zn(2+). The Helicase ATP-binding domain maps to 133–285 (IEAISKKEEL…LNGQLHSVRI (153 aa)). 146-153 (AVCGAGKT) is a binding site for ATP. The short motif at 233-236 (DEVD) is the DEAD box element. One can recognise a Helicase C-terminal domain in the interval 317–463 (AVKRWIEFHV…ELAAKVECTD (147 aa)).

This sequence belongs to the DEAD box helicase family. As to quaternary structure, monomer and dimer in solution. Interacts with DprA and ComFC; ComFA-ComFC form rings about 150 Angstroms in diameter with apparent 6-fold symmetry. The cofactor is Zn(2+).

It localises to the cytoplasm. Its function is as follows. Involved in transformation (genetic competence for DNA uptake). Required for DNA uptake but not for DNA binding to cells. DNA uptake is energy dependent, this protein may provide the driving force for DNA uptake. Does not have helicase activity, translocates on single-stranded (ss)DNA in a 5'-3' direction in an ATP-dependent manner, but does not unwind double-stranded (ds)DNA. ATP hydrolysis causes the release of ssDNA from ComFA. A ssDNA-stimulated ATPase; dsDNA does not stimulate ATPase. ATP hydrolysis causes the release of ssDNA from ComFA. Binds ssDNA but only very poorly to dsDNA in the absence of ATP. Binding to ssDNA does not require free DNA ends. The polypeptide is Competence protein ComFA (Bacillus subtilis (strain 168)).